Here is a 395-residue protein sequence, read N- to C-terminus: Acid ceramidase (395 aa).

An N-terminal signal peptide occupies residues 1 to 20; sequence MLGWSRLTFILLSGIVTCLV. Cysteine 31 and cysteine 340 form a disulfide bridge. Catalysis depends on cysteine 143, which acts as the Nucleophile. 4 N-linked (GlcNAc...) asparagine glycosylation sites follow: asparagine 195, asparagine 259, asparagine 286, and asparagine 342. Cysteine 388 and cysteine 392 are oxidised to a cystine.

This sequence belongs to the acid ceramidase family. In terms of assembly, heterodimer; disulfide-linked. The heterodimer is composed of the disulfide-linked alpha and beta chains produced by autocatalytic cleavage of the precursor. N-glycosylated. Post-translationally, proteolytically cleaved into two chains alpha and beta that remain associated via a disulfide bond. Cleavage gives rise to a conformation change that activates the enzyme. The same catalytic Cys residue mediates the autoproteolytic cleavage and subsequent hydrolysis of lipid substrates. The beta chain may undergo an additional C-terminal processing.

Its subcellular location is the lysosome. The protein localises to the secreted. The catalysed reaction is an N-acylsphing-4-enine + H2O = sphing-4-enine + a fatty acid. It catalyses the reaction N-dodecanoylsphing-4-enine + H2O = dodecanoate + sphing-4-enine. It carries out the reaction N-tetradecanoylsphing-4-enine + H2O = tetradecanoate + sphing-4-enine. The enzyme catalyses N-hexadecanoylsphing-4-enine + H2O = sphing-4-enine + hexadecanoate. The catalysed reaction is N-octadecanoylsphing-4-enine + H2O = sphing-4-enine + octadecanoate. It catalyses the reaction N-dodecanoyl-(4R)-hydroxysphinganine + H2O = (4R)-hydroxysphinganine + dodecanoate. It carries out the reaction N-(dodecanoyl)-sphinganine + H2O = dodecanoate + sphinganine. The enzyme catalyses N-(acetyl)-sphing-4-enine + H2O = sphing-4-enine + acetate. The catalysed reaction is N-(hexanoyl)sphing-4-enine + H2O = hexanoate + sphing-4-enine. It catalyses the reaction N-octanoylsphing-4-enine + H2O = octanoate + sphing-4-enine. It carries out the reaction N-(9Z-octadecenoyl)-sphing-4-enine + H2O = sphing-4-enine + (9Z)-octadecenoate. The enzyme catalyses N-dodecanoylethanolamine + H2O = dodecanoate + ethanolamine. It participates in lipid metabolism; sphingolipid metabolism. Functionally, lysosomal ceramidase that hydrolyzes sphingolipid ceramides into sphingosine and free fatty acids at acidic pH. Ceramides, sphingosine, and its phosphorylated form sphingosine-1-phosphate are bioactive lipids that mediate cellular signaling pathways regulating several biological processes including cell proliferation, apoptosis and differentiation. Has a higher catalytic efficiency towards C12-ceramides versus other ceramides. Also catalyzes the reverse reaction allowing the synthesis of ceramides from fatty acids and sphingosine. For the reverse synthetic reaction, the natural sphingosine D-erythro isomer is more efficiently utilized as a substrate compared to D-erythro-dihydrosphingosine and D-erythro-phytosphingosine, while the fatty acids with chain lengths of 12 or 14 carbons are the most efficiently used. Also has an N-acylethanolamine hydrolase activity. By regulating the levels of ceramides, sphingosine and sphingosine-1-phosphate in the epidermis, mediates the calcium-induced differentiation of epidermal keratinocytes. Also indirectly regulates tumor necrosis factor/TNF-induced apoptosis. By regulating the intracellular balance between ceramides and sphingosine, in adrenocortical cells, probably also acts as a regulator of steroidogenesis. The protein is Acid ceramidase of Bos taurus (Bovine).